The following is a 230-amino-acid chain: Sugar fermentation stimulation protein homolog (230 aa).

It belongs to the SfsA family.

The polypeptide is Sugar fermentation stimulation protein homolog (Clostridium botulinum (strain Alaska E43 / Type E3)).